Consider the following 497-residue polypeptide: Probable malate:quinone oxidoreductase (497 aa).

This sequence belongs to the MQO family. The cofactor is FAD.

The enzyme catalyses (S)-malate + a quinone = a quinol + oxaloacetate. It participates in carbohydrate metabolism; tricarboxylic acid cycle; oxaloacetate from (S)-malate (quinone route): step 1/1. The protein is Probable malate:quinone oxidoreductase of Wolinella succinogenes (strain ATCC 29543 / DSM 1740 / CCUG 13145 / JCM 31913 / LMG 7466 / NCTC 11488 / FDC 602W) (Vibrio succinogenes).